Consider the following 80-residue polypeptide: MATNDQKIDNKSTVSNMLENPMFQTFSKKETEKPSLSEYMEQLTSEFGEELDNLRQKEIFDHNKLQLLIESLRAGHKIYE.

The segment covering 1-10 (MATNDQKIDN) has biased composition (basic and acidic residues). The interval 1–35 (MATNDQKIDNKSTVSNMLENPMFQTFSKKETEKPS) is disordered. Over residues 11–26 (KSTVSNMLENPMFQTF) the composition is skewed to polar residues.

Belongs to the RSA3 family. Associates with nucleolar pre-ribosomal particles.

The protein resides in the nucleus. Its subcellular location is the nucleolus. Its function is as follows. Required for efficient biogenesis of the 60S ribosomal subunit. This is Ribosome assembly protein 3 (rsa3) from Schizosaccharomyces pombe (strain 972 / ATCC 24843) (Fission yeast).